A 167-amino-acid chain; its full sequence is Mannose-specific lectin (167 aa).

Residues 1–24 (MAFSISSTMIFLLSLALFSTLVSA) form the signal peptide. Residues 25 to 138 (DNHLLPGERL…PIFATGTNRF (114 aa)) form the Bulb-type lectin domain. Cys-53 and Cys-76 are joined by a disulfide.

In terms of assembly, homotetramer. In terms of tissue distribution, expressed in the pseudobulb, with highest levels of expression in the non-swollen internode (at protein level).

It is found in the secreted. In terms of biological role, mannose-specific lectin. Shows agglutinating activity towards chicken erythrocytes. Has antifungal activity against A.alternata and Collectotrichum species. This Dendrobium findlayanum (Findlay's orchid) protein is Mannose-specific lectin.